The primary structure comprises 376 residues: dTDP-4-amino-4,6-dideoxygalactose transaminase (376 aa).

K181 carries the N6-(pyridoxal phosphate)lysine modification.

Belongs to the DegT/DnrJ/EryC1 family. In terms of assembly, homotetramer. Pyridoxal 5'-phosphate is required as a cofactor.

It carries out the reaction dTDP-4-amino-4,6-dideoxy-alpha-D-galactose + 2-oxoglutarate = dTDP-4-dehydro-6-deoxy-alpha-D-glucose + L-glutamate. It functions in the pathway bacterial outer membrane biogenesis; enterobacterial common antigen biosynthesis. Catalyzes the synthesis of dTDP-4-amino-4,6-dideoxy-D-galactose (dTDP-Fuc4N) from dTDP-4-keto-6-deoxy-D-glucose (dTDP-D-Glc4O) and L-glutamate. The chain is dTDP-4-amino-4,6-dideoxygalactose transaminase from Escherichia coli (strain K12).